A 215-amino-acid polypeptide reads, in one-letter code: Protein Thf1 (215 aa).

Residues 188-209 (IELVQETIAAERRKKERRQAEQ) are a coiled coil.

This sequence belongs to the THF1 family.

In terms of biological role, may be involved in photosynthetic membrane biogenesis. The protein is Protein Thf1 of Synechococcus sp. (strain CC9902).